Consider the following 634-residue polypeptide: 1-deoxy-D-xylulose-5-phosphate synthase (634 aa).

Residues histidine 77 and 118-120 (GHA) each bind thiamine diphosphate. Residue aspartate 149 participates in Mg(2+) binding. Residues 150-151 (AS), asparagine 178, tyrosine 289, and glutamate 371 contribute to the thiamine diphosphate site. Residue asparagine 178 coordinates Mg(2+).

The protein belongs to the transketolase family. DXPS subfamily. As to quaternary structure, homodimer. Mg(2+) serves as cofactor. Requires thiamine diphosphate as cofactor.

It carries out the reaction D-glyceraldehyde 3-phosphate + pyruvate + H(+) = 1-deoxy-D-xylulose 5-phosphate + CO2. It participates in metabolic intermediate biosynthesis; 1-deoxy-D-xylulose 5-phosphate biosynthesis; 1-deoxy-D-xylulose 5-phosphate from D-glyceraldehyde 3-phosphate and pyruvate: step 1/1. Functionally, catalyzes the acyloin condensation reaction between C atoms 2 and 3 of pyruvate and glyceraldehyde 3-phosphate to yield 1-deoxy-D-xylulose-5-phosphate (DXP). This chain is 1-deoxy-D-xylulose-5-phosphate synthase, found in Leptospira interrogans serogroup Icterohaemorrhagiae serovar copenhageni (strain Fiocruz L1-130).